Here is a 428-residue protein sequence, read N- to C-terminus: Succinyl-CoA--L-malate CoA-transferase alpha subunit (428 aa).

Residues 1-31 form a disordered region; the sequence is MPPTGEEPSGHAESKPPASDPMSTPGTGQEQ. Over residues 21-31 the composition is skewed to polar residues; the sequence is PMSTPGTGQEQ. Residue aspartate 200 is the Nucleophile of the active site.

Belongs to the CoA-transferase III family. In terms of assembly, forms a large complex composed of six heterodimers (alpha, beta).

It carries out the reaction succinyl-CoA + (S)-malate = (S)-malyl-CoA + succinate. It catalyses the reaction (3S)-citramalate + succinyl-CoA = (3S)-citramalyl-CoA + succinate. Functionally, involved in the 3-hydroxypropionate cycle used for autotrophic carbon dioxide fixation. Catalyzes the transfer of CoA moiety from succinyl-CoA to L-malate to yield L-malyl-CoA. It is highly specific for succinyl-CoA as the CoA donor, however it can accept L-citramalate instead of L-malate as the CoA acceptor. In Chloroflexus aurantiacus, this protein is Succinyl-CoA--L-malate CoA-transferase alpha subunit (smtA).